We begin with the raw amino-acid sequence, 629 residues long: Embryonic polyadenylate-binding protein A (629 aa).

4 RRM domains span residues 11–89, 99–175, 191–268, and 294–370; these read ASLY…WSQR, GNVF…HFKS, TNVY…RAQK, and VNLY…LAQR. In terms of domain architecture, PABC spans 539-616; it reads QEPLTASLLA…AVAVLQAHQA (78 aa).

The protein belongs to the polyadenylate-binding protein type-1 family. In terms of assembly, interacts with dazl in an RNA-independent manner. The C-terminus can self-associate and also interact with the C-terminus of pabpc1, independently of RNA. RRM 1 and RRM 2 interact with both eif4g1 and paip1, and the C-terminus also interacts with paip1. Prior to oocyte maturation, found in a complex with dazl and pum2 proteins and spdy1 mRNA; pum2 dissociates from the complex during maturation. Interacts with the translation termination factor sup35/erf3. Expressed in adult testis, but at a reduced level compared to oocytes.

It localises to the cytoplasm. Functionally, binds and protects the poly(A) tail of mRNA with or without an AU-rich element (ARE) and prevents mRNA deadenylation. Stimulates the translation of mRNAs to which it is bound during early development. The chain is Embryonic polyadenylate-binding protein A (epabp-a) from Xenopus laevis (African clawed frog).